Consider the following 297-residue polypeptide: Bifonsecin B biosynthesis cluster protein A (297 aa).

A signal peptide spans 1–20 (MHFWWTAISAGLLCLPQALG). Residues asparagine 26, asparagine 56, asparagine 75, asparagine 124, asparagine 175, asparagine 210, and asparagine 280 are each glycosylated (N-linked (GlcNAc...) asparagine).

It belongs to the bfoA family.

Its function is as follows. Part of the gene cluster that mediates the biosynthesis of bifonsecin B, a dimeric gamma-naphthopyrone. The first step in the biosynthesis of bifonsecin B is the production of gamma-naphthopyrone precursor YWA1 by the non-reducing polyketide synthase albA, via condensation of one acetyl-CoA starter unit with 6 malonyl-CoA units. YWA1 is then methylated by bfoE at position C-6 to yield foncesin which is further methylated at position C-8 by bfoD to produce fonsecin B. A key enzyme in the biosynthetic pathway is the cytochrome P450 monooxygenase bfoB which catalyzes the oxidative dimerization of fonsecin B to bifonsecin B. Bfob also catalyzes the oxidative dimerization of rubrofusarin B into nigerone. The stereoselectivity of bfoB is influenced by the two natural monomeric substrates; homodimerization of fonsecin B yields a stereochemically pure biaryl, M-foncerine B, while rubrofusarin B yields a mixture of enantiomers M- and P-nigerone. The function of bfoA within the bifonsecin B biosynthesis pathway has not been determined yet. In Aspergillus brasiliensis (strain CBS 101740 / IMI 381727 / IBT 21946), this protein is Bifonsecin B biosynthesis cluster protein A.